Consider the following 264-residue polypeptide: Mediator of RNA polymerase II transcription subunit 4 (264 aa).

The segment at 183-264 (LTKLPGQEDG…DLDLFNPDEF (82 aa)) is disordered. Basic and acidic residues predominate over residues 200-225 (NEDKNIVKDAEGAEGEIRQDDKKEDD). Positions 236 to 264 (AEGDEDKNAGEDEDEAMDSDLDLFNPDEF) are enriched in acidic residues.

This sequence belongs to the Mediator complex subunit 4 family. Component of the Mediator complex.

Its subcellular location is the nucleus. In terms of biological role, component of the Mediator complex, a coactivator involved in the regulated transcription of nearly all RNA polymerase II-dependent genes. Mediator functions as a bridge to convey information from gene-specific regulatory proteins to the basal RNA polymerase II transcription machinery. Mediator is recruited to promoters by direct interactions with regulatory proteins and serves as a scaffold for the assembly of a functional preinitiation complex with RNA polymerase II and the general transcription factors. This is Mediator of RNA polymerase II transcription subunit 4 (MED4) from Candida glabrata (strain ATCC 2001 / BCRC 20586 / JCM 3761 / NBRC 0622 / NRRL Y-65 / CBS 138) (Yeast).